A 284-amino-acid polypeptide reads, in one-letter code: Interferon antagonist OPG039 (284 aa).

6 ANK repeats span residues 29 to 58, 60 to 89, 93 to 122, 127 to 157, 159 to 188, and 192 to 221; these read NGHS…LKNL, DNEF…DDSQ, KGNT…RLMF, GWKT…PFDL, ILLS…STNT, and LFIP…NIYS.

It belongs to the orthopoxvirus OPG039 family.

Its subcellular location is the host cytoplasm. The protein resides in the host nucleus. Inhibits antiviral activity induced by type I interferons. Does not block signal transduction of IFN, but is important to counter the host antiviral state induced by a pre-treatment with IFN. Plays a role in the inhibition of host NF-kappa-B activation by preventing the acetylation of the RELA/p65 subunit of NF-kappaB. In Cynomys gunnisoni (Gunnison's prairie dog), this protein is Interferon antagonist OPG039 (OPG039).